The primary structure comprises 465 residues: Putrescine aminotransferase (465 aa).

Residues 150–151 and glutamine 274 each bind pyridoxal 5'-phosphate; that span reads GT. Lysine 300 carries the N6-(pyridoxal phosphate)lysine modification. Threonine 332 contacts pyridoxal 5'-phosphate.

Belongs to the class-III pyridoxal-phosphate-dependent aminotransferase family. Putrescine aminotransferase subfamily. Pyridoxal 5'-phosphate is required as a cofactor.

It catalyses the reaction an alkane-alpha,omega-diamine + 2-oxoglutarate = an omega-aminoaldehyde + L-glutamate. The enzyme catalyses putrescine + 2-oxoglutarate = 1-pyrroline + L-glutamate + H2O. It carries out the reaction cadaverine + 2-oxoglutarate = 5-aminopentanal + L-glutamate. It functions in the pathway amine and polyamine degradation; putrescine degradation; 4-aminobutanal from putrescine (transaminase route): step 1/1. Catalyzes the aminotransferase reaction from putrescine to 2-oxoglutarate, leading to glutamate and 4-aminobutanal, which spontaneously cyclizes to form 1-pyrroline. This is the first step in one of two pathways for putrescine degradation, where putrescine is converted into 4-aminobutanoate (gamma-aminobutyrate or GABA) via 4-aminobutanal. Also functions as a cadaverine transaminase in a a L-lysine degradation pathway to succinate that proceeds via cadaverine, glutarate and L-2-hydroxyglutarate. This chain is Putrescine aminotransferase, found in Cronobacter sakazakii (strain ATCC BAA-894) (Enterobacter sakazakii).